The primary structure comprises 113 residues: Urocortin-2 (113 aa).

The first 23 residues, 1 to 23 (MMTRWALVVFVVLMLDRILFVPG), serve as a signal peptide directing secretion. A propeptide spanning residues 24 to 71 (TPIPTFQLLPQNSLETTPSSVTSESSSGTTTGPSASWSNSKASPYLDT) is cleaved from the precursor. Over residues 37–61 (LETTPSSVTSESSSGTTTGPSASWS) the composition is skewed to low complexity. The disordered stretch occupies residues 37–64 (LETTPSSVTSESSSGTTTGPSASWSNSK). Residue V110 is modified to Valine amide; partial.

The protein belongs to the sauvagine/corticotropin-releasing factor/urotensin I family. As to quaternary structure, binds with high affinity to CRF receptors 2-alpha and 2-beta. In terms of processing, glycosylated.

The protein localises to the secreted. Suppresses food intake, delays gastric emptying and decreases heat-induced edema. Might represent an endogenous ligand for maintaining homeostasis after stress. This chain is Urocortin-2 (Ucn2), found in Mus musculus (Mouse).